The chain runs to 801 residues: Fibroblast growth factor receptor 3 (801 aa).

Residues M1 to S20 form the signal peptide. The Extracellular portion of the chain corresponds to E21 to G369. The 103-residue stretch at P22–T124 folds into the Ig-like C2-type 1 domain. Residues C59 and C107 are joined by a disulfide bond. N-linked (GlcNAc...) asparagine glycosylation is present at N96. A disordered region spans residues D125–Y146. Acidic residues predominate over residues G130–E140. 2 Ig-like C2-type domains span residues P145 to D238 and P247 to V349. Cysteines 170 and 222 form a disulfide. Residues N219, N256, N288, N309, and N322 are each glycosylated (N-linked (GlcNAc...) asparagine). Residues C269 and C333 are joined by a disulfide bond. A helical membrane pass occupies residues V370–C390. Topologically, residues R391–T801 are cytoplasmic. Residues S438 and S439 each carry the phosphoserine modification. One can recognise a Protein kinase domain in the interval L466–L756. Residues L472–V480 and K502 contribute to the ATP site. The Proton acceptor role is filled by D611. 4 positions are modified to phosphotyrosine; by autocatalysis: Y641, Y642, Y719, and Y755. A disordered region spans residues F762–T801. The segment covering S766–S782 has biased composition (low complexity). Residues P790–T801 are compositionally biased toward pro residues.

The protein belongs to the protein kinase superfamily. Tyr protein kinase family. Fibroblast growth factor receptor subfamily. As to quaternary structure, monomer. Homodimer after ligand binding. Interacts with FGF1, FGF2, FGF4, FGF6; FGF8, FGF9, FGF10, FGF17, FGF18, FGF19, FGF20 and FGF23 (in vitro). Interacts with KLB. Affinity for fibroblast growth factors (FGFs) is increased by heparan sulfate glycosaminoglycans that function as coreceptors. Likewise, KLB increases the affinity for FGF19 and FGF21. Interacts with PIK3R1, PLCG1, SOCS1 and SOCS3. In terms of processing, autophosphorylated. Binding of FGF family members together with heparan sulfate proteoglycan or heparin promotes receptor dimerization and autophosphorylation on tyrosine residues. Autophosphorylation occurs in trans between the two FGFR molecules present in the dimer. Phosphorylation at Tyr-719 is essential for stimulation of cell proliferation and activation of PIK3R1, STAT1 and MAP kinase signaling. Phosphorylation at Tyr-755 is required for interaction with PIK3R1 and PLCG1. Post-translationally, ubiquitinated. Is rapidly ubiquitinated after ligand binding and autophosphorylation, leading to receptor internalization and degradation. Subject to both proteasomal and lysosomal degradation. N-glycosylated in the endoplasmic reticulum. The N-glycan chains undergo further maturation to an Endo H-resistant form in the Golgi apparatus. In terms of tissue distribution, in embryo, expressed in heart, lung, kidney, skin, head and liver but not in muscle. In adult, highest levels in brain. Also expressed in liver, lung, kidney, testis, ovary and uterus. Very low levels in heart, thymus, spleen and muscle.

It is found in the cell membrane. Its subcellular location is the cytoplasmic vesicle. The protein resides in the endoplasmic reticulum. It carries out the reaction L-tyrosyl-[protein] + ATP = O-phospho-L-tyrosyl-[protein] + ADP + H(+). With respect to regulation, present in an inactive conformation in the absence of bound ligand. Ligand binding leads to dimerization and activation by autophosphorylation on tyrosine residues. Tyrosine-protein kinase that acts as a cell-surface receptor for fibroblast growth factors and plays an essential role in the regulation of cell proliferation, differentiation and apoptosis. Plays an essential role in the regulation of chondrocyte differentiation, proliferation and apoptosis, and is required for normal skeleton development. Regulates both osteogenesis and postnatal bone mineralization by osteoblasts. Promotes apoptosis in chondrocytes, but can also promote cancer cell proliferation. Required for normal development of the inner ear. Phosphorylates PLCG1, CBL and FRS2. Ligand binding leads to the activation of several signaling cascades. Activation of PLCG1 leads to the production of the cellular signaling molecules diacylglycerol and inositol 1,4,5-trisphosphate. Phosphorylation of FRS2 triggers recruitment of GRB2, GAB1, PIK3R1 and SOS1, and mediates activation of RAS, MAPK1/ERK2, MAPK3/ERK1 and the MAP kinase signaling pathway, as well as of the AKT1 signaling pathway. Plays a role in the regulation of vitamin D metabolism. Mutations that lead to constitutive kinase activation or impair normal FGFR3 maturation, internalization and degradation lead to aberrant signaling. Over-expressed or constitutively activated FGFR3 promotes activation of STAT1, STAT5A and STAT5B. Plays a role in postnatal lung development. The protein is Fibroblast growth factor receptor 3 (Fgfr3) of Mus musculus (Mouse).